Consider the following 396-residue polypeptide: Phosphoglycerate kinase (396 aa).

Substrate-binding positions include aspartate 21–asparagine 23, arginine 37, histidine 60–arginine 63, arginine 121, and arginine 154. ATP contacts are provided by residues lysine 205, glycine 296, glutamate 327, and glycine 353–serine 356.

Belongs to the phosphoglycerate kinase family. As to quaternary structure, monomer.

Its subcellular location is the cytoplasm. It catalyses the reaction (2R)-3-phosphoglycerate + ATP = (2R)-3-phospho-glyceroyl phosphate + ADP. Its pathway is carbohydrate degradation; glycolysis; pyruvate from D-glyceraldehyde 3-phosphate: step 2/5. This Anaeromyxobacter sp. (strain Fw109-5) protein is Phosphoglycerate kinase.